We begin with the raw amino-acid sequence, 107 residues long: U1-lycotoxin-Ls1b (107 aa).

Positions 1-20 (MMKVLVVVALLVTLISYSSS) are cleaved as a signal peptide. A propeptide spanning residues 21–41 (EGIDDLEADELLSLMANEQTR) is cleaved from the precursor. 4 disulfide bridges follow: cysteine 44–cysteine 59, cysteine 51–cysteine 68, cysteine 58–cysteine 86, and cysteine 70–cysteine 84.

It belongs to the neurotoxin 19 (CSTX) family. 04 (U1-Lctx) subfamily. In terms of tissue distribution, expressed by the venom gland.

The protein resides in the secreted. The sequence is that of U1-lycotoxin-Ls1b from Lycosa singoriensis (Wolf spider).